A 295-amino-acid chain; its full sequence is Reticulon-like protein 1 (295 aa).

Residues 1–50 (MSASAQHSQAQQQQQQKSCNCDLLLWRNPVQTGKYFGGSLLALLILKKVN) lie on the Cytoplasmic side of the membrane. Residues 20 to 220 (NCDLLLWRNP…ISNLVKSKTA (201 aa)) form the Reticulon domain. A helical transmembrane segment spans residues 51-73 (LITFFLKVAYTILFTTGSIEFVS). Residues 74-142 (KLFLGQGLIT…ALFLLHKFFS (69 aa)) are Lumenal-facing. A helical membrane pass occupies residues 143–163 (WFSIWTIVFVADIFTFTLPVI). The Cytoplasmic segment spans residues 164-295 (YHSYKHEIDA…LQNELEKNNA (132 aa)). Phosphothreonine occurs at positions 186 and 219. Positions 219–235 (TAPVSSTAGPQTASTSK) are enriched in polar residues. Positions 219 to 295 (TAPVSSTAGP…LQNELEKNNA (77 aa)) are disordered. The residue at position 232 (Ser-232) is a Phosphoserine. Positions 265-295 (STTQEFNVDELSNELKKSTKNLQNELEKNNA) form a coiled coil.

In terms of assembly, interacts with POM33.

The protein resides in the endoplasmic reticulum membrane. In Saccharomyces cerevisiae (strain ATCC 204508 / S288c) (Baker's yeast), this protein is Reticulon-like protein 1 (RTN1).